Here is a 273-residue protein sequence, read N- to C-terminus: Dermonecrotic toxin LruSicTox-alphaIC1d (273 aa).

The active site involves histidine 5. Positions 25 and 27 each coordinate Mg(2+). Histidine 41 serves as the catalytic Nucleophile. 2 cysteine pairs are disulfide-bonded: cysteine 45/cysteine 51 and cysteine 47/cysteine 190. Residue aspartate 85 participates in Mg(2+) binding.

Belongs to the arthropod phospholipase D family. Class II subfamily. It depends on Mg(2+) as a cofactor. As to expression, expressed by the venom gland.

The protein resides in the secreted. The enzyme catalyses an N-(acyl)-sphingosylphosphocholine = an N-(acyl)-sphingosyl-1,3-cyclic phosphate + choline. It carries out the reaction an N-(acyl)-sphingosylphosphoethanolamine = an N-(acyl)-sphingosyl-1,3-cyclic phosphate + ethanolamine. It catalyses the reaction a 1-acyl-sn-glycero-3-phosphocholine = a 1-acyl-sn-glycero-2,3-cyclic phosphate + choline. The catalysed reaction is a 1-acyl-sn-glycero-3-phosphoethanolamine = a 1-acyl-sn-glycero-2,3-cyclic phosphate + ethanolamine. Dermonecrotic toxins cleave the phosphodiester linkage between the phosphate and headgroup of certain phospholipids (sphingolipid and lysolipid substrates), forming an alcohol (often choline) and a cyclic phosphate. This toxin acts on sphingomyelin (SM). It may also act on ceramide phosphoethanolamine (CPE), lysophosphatidylcholine (LPC) and lysophosphatidylethanolamine (LPE), but not on lysophosphatidylserine (LPS), and lysophosphatidylglycerol (LPG). It acts by transphosphatidylation, releasing exclusively cyclic phosphate products as second products. Induces dermonecrosis, hemolysis, increased vascular permeability, edema, inflammatory response, and platelet aggregation. This Loxosceles rufescens (Mediterranean recluse spider) protein is Dermonecrotic toxin LruSicTox-alphaIC1d.